The following is a 135-amino-acid chain: Cytochrome b-c1 complex subunit 6, mitochondrial (135 aa).

The segment at 1 to 70 (MSFFRDLLES…ETADPLDTLR (70 aa)) is disordered. Over residues 19 to 64 (EPVEDVEVEQPEDAPEEEVSEETVEEEEDDDEDDDEDDEEEEETAD) the composition is skewed to acidic residues.

It belongs to the UQCRH/QCR6 family. As to quaternary structure, component of the ubiquinol-cytochrome c oxidoreductase (cytochrome b-c1 complex, complex III, CIII), a multisubunit enzyme composed of 10 subunits. The complex is composed of 3 respiratory subunits cytochrome b (COB), cytochrome c1 (CYT1) and Rieske protein (RIP1), 2 core protein subunits COR1 and QCR2, and 5 low-molecular weight protein subunits QCR6, QCR7, QCR8, QCR9 and QCR10. The complex exists as an obligatory dimer and forms supercomplexes (SCs) in the inner mitochondrial membrane with a monomer or a dimer of cytochrome c oxidase (complex IV, CIV), resulting in 2 different assemblies (supercomplexes III(2)IV and III(2)IV(2)).

The protein localises to the mitochondrion inner membrane. Functionally, component of the ubiquinol-cytochrome c oxidoreductase, a multisubunit transmembrane complex that is part of the mitochondrial electron transport chain which drives oxidative phosphorylation. The complex plays an important role in the uptake of multiple carbon sources present in different host niches. This is Cytochrome b-c1 complex subunit 6, mitochondrial from Candida albicans (strain SC5314 / ATCC MYA-2876) (Yeast).